A 226-amino-acid chain; its full sequence is MTQQLTWHDVIGAEKEQSYFQQTLNFVEAERQAGKVIYPPAKDVFNAFRYTEFQDVKVVILGQDPYHGPNQAHGLCFSVLPGIKTPPSLVNMYKELAQDIQGFQIPAHGYLEAWAKQGVLLLNTVLTVEQGKAHSHASLGWETFTDKVIEAINQHQQGVVFLLWGSHAQKKGRFIDRHKHVVLTAPHPSPLSAHRGFLGCKHFSQANQHLLDQGKQAIDWQLPLSL.

Catalysis depends on Asp-64, which acts as the Proton acceptor.

This sequence belongs to the uracil-DNA glycosylase (UDG) superfamily. UNG family.

Its subcellular location is the cytoplasm. The catalysed reaction is Hydrolyzes single-stranded DNA or mismatched double-stranded DNA and polynucleotides, releasing free uracil.. In terms of biological role, excises uracil residues from the DNA which can arise as a result of misincorporation of dUMP residues by DNA polymerase or due to deamination of cytosine. The chain is Uracil-DNA glycosylase from Vibrio vulnificus (strain CMCP6).